We begin with the raw amino-acid sequence, 170 residues long: NADH-ubiquinone oxidoreductase chain 6 (170 aa).

Transmembrane regions (helical) follow at residues 1-21, 26-46, 49-69, 86-106, and 138-158; these read MIYMVSVSMMVLVLGLVAVAS, FYAALGLVLAAGAGCLVIVSF, SFLSIVLFLIYLGGMLVVFAY, VVFYVLVYLIGVLVWYLFLGG, and WVIIVYWWVSIIINFVCGIWV.

Belongs to the complex I subunit 6 family. In terms of assembly, core subunit of respiratory chain NADH dehydrogenase (Complex I) which is composed of 45 different subunits.

Its subcellular location is the mitochondrion inner membrane. It catalyses the reaction a ubiquinone + NADH + 5 H(+)(in) = a ubiquinol + NAD(+) + 4 H(+)(out). Its function is as follows. Core subunit of the mitochondrial membrane respiratory chain NADH dehydrogenase (Complex I) which catalyzes electron transfer from NADH through the respiratory chain, using ubiquinone as an electron acceptor. Essential for the catalytic activity and assembly of complex I. The protein is NADH-ubiquinone oxidoreductase chain 6 (mt-nd6) of Xenopus laevis (African clawed frog).